A 767-amino-acid chain; its full sequence is Bifunctional lysine-specific demethylase and histidyl-hydroxylase NO66 (767 aa).

Residues 21 to 324 (TVSQKQQREK…GRQEAHRQNS (304 aa)) are disordered. Ser-44 bears the Phosphoserine mark. Acidic residues predominate over residues 46 to 71 (SDDDDEDDGEGEDDNDSNSDEDESGS). Residues 72 to 81 (ESDATSADDS) are compositionally biased toward low complexity. Residues 82 to 98 (FSSDDNDDDDSGDEDGS) are compositionally biased toward acidic residues. Composition is skewed to polar residues over residues 127 to 137 (YTINSENSSVE) and 177 to 199 (ESAT…TSKP). The residue at position 214 (Ser-214) is a Phosphoserine. Polar residues predominate over residues 262-279 (PSSSGASCPLPSKTSKQV). Over residues 315 to 324 (GRQEAHRQNS) the composition is skewed to basic and acidic residues. The 146-residue stretch at 420–565 (CSIRILNPST…NLLEKLMPMV (146 aa)) folds into the JmjC domain. The Fe cation site is built by His-466, Asp-468, and His-531.

It belongs to the ROX family. NO66 subfamily. Fe(2+) serves as cofactor.

It localises to the nucleus. The enzyme catalyses N(6),N(6)-dimethyl-L-lysyl(36)-[histone H3] + 2 2-oxoglutarate + 2 O2 = L-lysyl(36)-[histone H3] + 2 formaldehyde + 2 succinate + 2 CO2. In terms of biological role, oxygenase that can act as both a histone lysine demethylase and a ribosomal histidine hydroxylase. Specifically demethylates 'Lys-4' (H3K4me) and 'Lys-36' (H3K36me) of histone H3, thereby playing a central role in histone code. The sequence is that of Bifunctional lysine-specific demethylase and histidyl-hydroxylase NO66 from Drosophila willistoni (Fruit fly).